The following is an 80-amino-acid chain: Reactive oxygen species modulator 1 (80 aa).

Residues 22 to 44 (MGFMMGFAVGMAAGAMFGTFSCL) form a helical membrane-spanning segment. The tract at residues 42-60 (SCLRIGMRGRELMGGVGKT) is sufficient for antibacterial activity.

Belongs to the MGR2 family.

Its subcellular location is the mitochondrion inner membrane. In terms of biological role, has antibacterial activity against a variety of bacteria including S.aureus, P.aeruginosa and M.tuberculosis. Acts by inducing bacterial membrane breakage. Functionally, induces production of reactive oxygen species (ROS) which are necessary for cell proliferation. May play a role in inducing oxidative DNA damage and replicative senescence. May play a role in the coordination of mitochondrial morphology and cell proliferation. This Danio rerio (Zebrafish) protein is Reactive oxygen species modulator 1 (romo1).